A 310-amino-acid chain; its full sequence is Elongation factor Ts (310 aa).

The tract at residues threonine 80–valine 83 is involved in Mg(2+) ion dislocation from EF-Tu.

The protein belongs to the EF-Ts family.

The protein resides in the cytoplasm. In terms of biological role, associates with the EF-Tu.GDP complex and induces the exchange of GDP to GTP. It remains bound to the aminoacyl-tRNA.EF-Tu.GTP complex up to the GTP hydrolysis stage on the ribosome. This chain is Elongation factor Ts, found in Methylocella silvestris (strain DSM 15510 / CIP 108128 / LMG 27833 / NCIMB 13906 / BL2).